The primary structure comprises 122 residues: ATP synthase epsilon chain (122 aa).

The protein belongs to the ATPase epsilon chain family. F-type ATPases have 2 components, CF(1) - the catalytic core - and CF(0) - the membrane proton channel. CF(1) has five subunits: alpha(3), beta(3), gamma(1), delta(1), epsilon(1). CF(0) has three main subunits: a, b and c.

It is found in the cell membrane. Functionally, produces ATP from ADP in the presence of a proton gradient across the membrane. The protein is ATP synthase epsilon chain of Rhodococcus jostii (strain RHA1).